A 1044-amino-acid polypeptide reads, in one-letter code: MRYRASALGSDGVRVTMESALTARDRVGVQDFVLLENFTSEAAFIENLRRRFRENLIYTYIGPVLVSVNPYRDLQIYTRQHMERYRGVSFYEVPPHLFAVADTVYRALRTERRDQAVMISGESGAGKTEATKRLLQFYAETCPAPERGGAVRDRLLQSNPVLEAFGNAKTLRNDNSSRFGKYMDVQFDFKGAPVGGHILSYLLEKSRVVHQNHGERNFHVFYQLLEGGEEEALRRLGLERNPQSYLYLVKGQCAKVSSINDKSDWKVVRKALSVIDFTEDEVEDLLSIVASVLHLGNIHFAADEDSNAQVTTENQLKYLTRLLGVEGTTLREALTHRKIIAKGEELLSPLNLEQAAYARDALAKAVYSRTFTWLVRKINRSLASKDAESPSWRSTTVLGLLDIYGFEVFQHNSFEQFCINYCNEKLQQLFIELTLKSEQEEYEAEGIAWEPVQYFNNKIICDLVEEKFKGIISILDEECLRPGEATDLTFLEKLEDTIKHHPHFLTHKLADQKTRKSLDRGEFRLLHYAGEVTYSVTGFLDKNNDLLFRNLKETMCSSTNPIMAQCFDKSELSDKKRPETVATQFKMSLLQLVEILRSKEPAYIRCIKPNDAKQPGRFDEVLIRHQVKYLGLMENLRVRRAGFAYRRKYEAFLQRYKSLCPETWPVWTGRPQDGVAVLVRHLGYKPEEYKMGRTKIFIRFPKTLFATEDSLEVRRQSLATKIQAAWRGFHWRQKFLRVKRSAICIQSWWRGTLGRRKAAKRKWAAQTIRRLIRGFILRHAPRCPENAFFLDHVRTSFLLNLRRQLPRNVLDTSWPTPPPALREASELLRELCMKNMVWKYCRSISPEWKQQLQQKAVASEIFKGKKDNYPQSVPRLFISTRLGTEEISPRVLQALGSEPIQYAVPVVKYDRKGYKPRSRQLLLTPSAVVIVEDAKVKQRIDYANLTGISVSSLSDSLFVLHVQREDSKQKGDVVLQSDHVIETLTKTALSADRVNNININQGSITFAGGPGRDGIIDFTSGSELLITKAKNGHLAVVAPRLNSR.

Residues 28–712 enclose the Myosin motor domain; it reads GVQDFVLLEN…TLFATEDSLE (685 aa). ATP is bound by residues asparagine 69, tyrosine 77, 120-129, and 173-177; these read SGESGAGKTE and NDNSS. The residue at position 364 (lysine 364) is an N6-methyllysine. A Phosphoserine modification is found at serine 389. N6-acetyllysine is present on lysine 467. Residue serine 517 is modified to Phosphoserine. The interval 589–611 is actin-binding; it reads LLQLVEILRSKEPAYIRCIKPND. IQ domains lie at 715–744 and 738–767; these read RQSLATKIQAAWRGFHWRQKFLRVKRSAIC and VKRSAICIQSWWRGTLGRRKAAKRKWAAQT. Phosphoserine is present on residues serine 845 and serine 1022. In terms of domain architecture, TH1 spans 866-1040; the sequence is KDNYPQSVPR…NGHLAVVAPR (175 aa).

Belongs to the TRAFAC class myosin-kinesin ATPase superfamily. Myosin family. Interacts (via its IQ motifs) with CABP1 and CIB1; the interaction with CABP1 and CIB1 is calcium-dependent. Interacts (via tail domain) with PLEKHB1 (via PH domain); the interaction is not affected by the presence or absence of calcium and CALM. Interacts with POLR1A. Interacts with POLR2A. Component of the B-WICH complex, at least composed of SMARCA5/SNF2H, BAZ1B/WSTF, SF3B1, DEK, MYO1C, ERCC6, MYBBP1A and DDX21. Interacts (via its IQ motifs) with CALM; this precludes interaction with YWHAB. Interacts with YWHAB; this precludes interaction with CALM. Interacts with RPS6. Interacts with actin. Interacts with LLPH. Interacts with GLUT4. Interacts (via its IQ motifs) with SH3BGRL3; the interaction is dependent on calcium and takes place at membrane ruffles.

The protein resides in the cytoplasm. The protein localises to the nucleus. It localises to the cell cortex. It is found in the cell projection. Its subcellular location is the stereocilium membrane. The protein resides in the cytoplasmic vesicle. The protein localises to the ruffle membrane. In terms of biological role, myosins are actin-based motor molecules with ATPase activity. Unconventional myosins serve in intracellular movements. Their highly divergent tails are presumed to bind to membranous compartments, which would be moved relative to actin filaments. Involved in glucose transporter recycling in response to insulin by regulating movement of intracellular GLUT4-containing vesicles to the plasma membrane. Component of the hair cell's (the sensory cells of the inner ear) adaptation-motor complex. Acts as a mediator of adaptation of mechanoelectrical transduction in stereocilia of vestibular hair cells. Binds phosphoinositides and links the actin cytoskeleton to cellular membranes. This is Unconventional myosin-Ic (Myo1c) from Rattus norvegicus (Rat).